A 70-amino-acid polypeptide reads, in one-letter code: Large ribosomal subunit protein uL29 (70 aa).

The protein belongs to the universal ribosomal protein uL29 family.

In Methanocaldococcus jannaschii (strain ATCC 43067 / DSM 2661 / JAL-1 / JCM 10045 / NBRC 100440) (Methanococcus jannaschii), this protein is Large ribosomal subunit protein uL29 (rpl29).